The chain runs to 410 residues: Protein TIC 214 (410 aa).

Transmembrane regions (helical) follow at residues 22–42 (FVFGLICGSLLGTSMNVGSFI), 61–81 (GSAISETFFLFLILFGYIGVI), 87–107 (LEPSLTFIITVFCADTIIGFL), 131–151 (AVIVFGNPGSTWGATSLITSI), 161–181 (LFLFGVFLGIFVIGCGIGFLI), and 210–230 (LALCILILSTIYYHWQVYIGL).

This sequence belongs to the TIC214 family. In terms of assembly, part of the Tic complex.

It is found in the plastid. The protein localises to the chloroplast inner membrane. Its function is as follows. Involved in protein precursor import into chloroplasts. May be part of an intermediate translocation complex acting as a protein-conducting channel at the inner envelope. This is Protein TIC 214 from Mesostigma viride (Green alga).